A 440-amino-acid chain; its full sequence is Chromosome partition protein MukF (440 aa).

Residues 208-236 (LSETSGTLRELQDTLEAAGDKLQANLLQI) are leucine-zipper.

This sequence belongs to the MukF family. Interacts, and probably forms a ternary complex, with MukE and MukB via its C-terminal region. The complex formation is stimulated by calcium or magnesium. It is required for an interaction between MukE and MukB.

Its subcellular location is the cytoplasm. The protein localises to the nucleoid. Functionally, involved in chromosome condensation, segregation and cell cycle progression. May participate in facilitating chromosome segregation by condensation DNA from both sides of a centrally located replisome during cell division. Not required for mini-F plasmid partitioning. Probably acts via its interaction with MukB and MukE. Overexpression results in anucleate cells. It has a calcium binding activity. The protein is Chromosome partition protein MukF of Cronobacter sakazakii (strain ATCC BAA-894) (Enterobacter sakazakii).